Consider the following 785-residue polypeptide: Endonuclease MutS2 (785 aa).

An ATP-binding site is contributed by 335–342 (GPNTGGKT). In terms of domain architecture, Smr spans 710 to 785 (LDLRGERYED…GNGVTIVEFK (76 aa)).

The protein belongs to the DNA mismatch repair MutS family. MutS2 subfamily. As to quaternary structure, homodimer. Binds to stalled ribosomes, contacting rRNA.

In terms of biological role, endonuclease that is involved in the suppression of homologous recombination and thus may have a key role in the control of bacterial genetic diversity. Acts as a ribosome collision sensor, splitting the ribosome into its 2 subunits. Detects stalled/collided 70S ribosomes which it binds and splits by an ATP-hydrolysis driven conformational change. Acts upstream of the ribosome quality control system (RQC), a ribosome-associated complex that mediates the extraction of incompletely synthesized nascent chains from stalled ribosomes and their subsequent degradation. Probably generates substrates for RQC. The sequence is that of Endonuclease MutS2 from Listeria innocua serovar 6a (strain ATCC BAA-680 / CLIP 11262).